We begin with the raw amino-acid sequence, 617 residues long: Proline--tRNA ligase (617 aa).

The protein belongs to the class-II aminoacyl-tRNA synthetase family. ProS type 1 subfamily. Homodimer.

It is found in the cytoplasm. It catalyses the reaction tRNA(Pro) + L-proline + ATP = L-prolyl-tRNA(Pro) + AMP + diphosphate. Its function is as follows. Catalyzes the attachment of proline to tRNA(Pro) in a two-step reaction: proline is first activated by ATP to form Pro-AMP and then transferred to the acceptor end of tRNA(Pro). As ProRS can inadvertently accommodate and process non-cognate amino acids such as alanine and cysteine, to avoid such errors it has two additional distinct editing activities against alanine. One activity is designated as 'pretransfer' editing and involves the tRNA(Pro)-independent hydrolysis of activated Ala-AMP. The other activity is designated 'posttransfer' editing and involves deacylation of mischarged Ala-tRNA(Pro). The misacylated Cys-tRNA(Pro) is not edited by ProRS. This Streptococcus pneumoniae serotype 19F (strain G54) protein is Proline--tRNA ligase.